The chain runs to 328 residues: Phosphate acyltransferase (328 aa).

Belongs to the PlsX family. In terms of assembly, homodimer. Probably interacts with PlsY.

It is found in the cytoplasm. The enzyme catalyses a fatty acyl-[ACP] + phosphate = an acyl phosphate + holo-[ACP]. It participates in lipid metabolism; phospholipid metabolism. Its function is as follows. Catalyzes the reversible formation of acyl-phosphate (acyl-PO(4)) from acyl-[acyl-carrier-protein] (acyl-ACP). This enzyme utilizes acyl-ACP as fatty acyl donor, but not acyl-CoA. The protein is Phosphate acyltransferase of Pseudothermotoga lettingae (strain ATCC BAA-301 / DSM 14385 / NBRC 107922 / TMO) (Thermotoga lettingae).